The primary structure comprises 427 residues: Enolase (427 aa).

Gln-163 contributes to the (2R)-2-phosphoglycerate binding site. Glu-205 acts as the Proton donor in catalysis. The Mg(2+) site is built by Asp-242, Glu-285, and Asp-312. The (2R)-2-phosphoglycerate site is built by Lys-337, Arg-366, Ser-367, and Lys-388. Lys-337 acts as the Proton acceptor in catalysis.

Belongs to the enolase family. Requires Mg(2+) as cofactor.

The protein resides in the cytoplasm. Its subcellular location is the secreted. The protein localises to the cell surface. The catalysed reaction is (2R)-2-phosphoglycerate = phosphoenolpyruvate + H2O. It functions in the pathway carbohydrate degradation; glycolysis; pyruvate from D-glyceraldehyde 3-phosphate: step 4/5. Its function is as follows. Catalyzes the reversible conversion of 2-phosphoglycerate (2-PG) into phosphoenolpyruvate (PEP). It is essential for the degradation of carbohydrates via glycolysis. The polypeptide is Enolase (Burkholderia multivorans (strain ATCC 17616 / 249)).